The sequence spans 1544 residues: Rho guanine nucleotide exchange factor 12 (1544 aa).

The tract at residues 1 to 62 (MSGTQSTITD…KTKSSSEESR (62 aa)) is disordered. Serine 2 bears the N-acetylserine mark. The segment covering 28 to 45 (SPTDKKQKVERIASHDFD) has biased composition (basic and acidic residues). Residue serine 41 is modified to Phosphoserine. The PDZ domain maps to 72 to 151 (CVIIQKDDNG…LTVQGRPPGS (80 aa)). The stretch at 194–262 (MGEENNVVHN…LSKATGSAQD (69 aa)) forms a coiled coil. The disordered stretch occupies residues 247-346 (PQLQEQLSKA…SLVGSPSTRI (100 aa)). 2 stretches are compositionally biased toward polar residues: residues 249–260 (LQEQLSKATGSA) and 293–309 (DCSSGDASRPSSDNADS). A Phosphoserine modification is found at serine 309. A compositionally biased stretch (basic and acidic residues) spans 313–329 (GPKERIYLEENPEKSET). Residues 330 to 344 (IQDTDTQSLVGSPST) are compositionally biased toward polar residues. Serine 341 is subject to Phosphoserine. The RGSL domain maps to 367–558 (GQCSCFQSIE…LMYMKHLGVK (192 aa)). A disordered region spans residues 570-706 (GRIGFLPKIK…GDTLDGTPRT (137 aa)). Positions 582 to 592 (MKKDKEGEEKG) are enriched in basic and acidic residues. The span at 631–640 (STPSSVSPEP) shows a compositional bias: polar residues. Serine 637 bears the Phosphoserine mark. Residues 663-676 (ANSMSSVASGASFS) show a composition bias toward low complexity. Threonine 736 is subject to Phosphothreonine. The 191-residue stretch at 787 to 977 (KRQEVINELF…RQILNYVNQA (191 aa)) folds into the DH domain. The 114-residue stretch at 1019 to 1132 (KMIHEGPLVW…WQDLICRMAA (114 aa)) folds into the PH domain. Polar residues predominate over residues 1138–1149 (STKPIPLPQSTP). Residues 1138 to 1179 (STKPIPLPQSTPGEGDNDEEDPSKLKEEQHGISVTGLQSPDR) form a disordered region. Residues serine 1288, serine 1327, serine 1377, serine 1457, and serine 1541 each carry the phosphoserine modification.

As to quaternary structure, interacts with GNA12 and GNA13, probably through the RGS-like domain. Interacts with RHOA, PLXNB1 and PLXNB2. Interacts through its PDZ domain with IGF1R beta subunit. Interacts with GCSAM. Found in a complex with ARHGEF11 and ARHGEF12; binding to ARHGEF11 and ARHGEF12 enhances CDC42 GEF activity of PLEKHG4B, and PLEKHG4B, in turn, inhibits ARHGEF11- and ARHGEF12-mediated RHOA activation. As to expression, ubiquitously expressed. Isoform 2 is found in jejunum and testis.

It localises to the cytoplasm. The protein localises to the membrane. Its function is as follows. May play a role in the regulation of RhoA GTPase by guanine nucleotide-binding alpha-12 (GNA12) and alpha-13 (GNA13). Acts as guanine nucleotide exchange factor (GEF) for RhoA GTPase and may act as GTPase-activating protein (GAP) for GNA12 and GNA13. This Homo sapiens (Human) protein is Rho guanine nucleotide exchange factor 12 (ARHGEF12).